Here is a 57-residue protein sequence, read N- to C-terminus: Potassium channel toxin alpha-KTx 8.8 (57 aa).

A signal peptide spans 1 to 19 (MCRLYAIILIVLVMNVIMT). A propeptide spanning residues 20 to 28 (IIPDSKVEV) is cleaved from the precursor. Intrachain disulfides connect cysteine 31/cysteine 47, cysteine 34/cysteine 52, and cysteine 38/cysteine 54.

The protein belongs to the short scorpion toxin superfamily. Potassium channel inhibitor family. Alpha-KTx 08 subfamily. In terms of processing, contains 3 disulfide bonds. Expressed by the venom gland.

The protein resides in the secreted. Selectively inhibits voltage-gated potassium channels rKv1.2/KCNA2 (IC(50)=331 nM) and hKv1.3/KCNA3 (IC(50)=503 nM). Partially inihibts rKv1.6/KCNA6 (IC(50)=9983 nM). This chain is Potassium channel toxin alpha-KTx 8.8, found in Orthochirus scrobiculosus (Central Asian scorpion).